A 114-amino-acid polypeptide reads, in one-letter code: Large ribosomal subunit protein bL19 (114 aa).

It belongs to the bacterial ribosomal protein bL19 family.

Functionally, this protein is located at the 30S-50S ribosomal subunit interface and may play a role in the structure and function of the aminoacyl-tRNA binding site. In Bacillus cereus (strain AH187), this protein is Large ribosomal subunit protein bL19.